Here is a 688-residue protein sequence, read N- to C-terminus: Probable xyloglucan glycosyltransferase 7 (688 aa).

Residues 1–25 (MAPSWWGRSGGGGVGNGGGTPVVVK) are disordered. Gly residues predominate over residues 8 to 20 (RSGGGGVGNGGGT). Helical transmembrane passes span 121-141 (VSLV…LQGW) and 183-203 (VALF…CFWI). D269 is an active-site residue. Residues D328 and D330 each coordinate substrate. D422 is a catalytic residue. Transmembrane regions (helical) follow at residues 500–520 (LILP…TMFV) and 525–545 (LPAW…ILPA). The tract at residues 604–635 (HSKQQRVGSAPNLDALTKEESNPKKDSKKKKH) is disordered. Over residues 619–628 (LTKEESNPKK) the composition is skewed to basic and acidic residues. Helical transmembrane passes span 638–657 (IYRK…ARSL) and 663–683 (IHFY…LDLI).

This sequence belongs to the glycosyltransferase 2 family. Plant cellulose synthase-like C subfamily.

The protein localises to the golgi apparatus membrane. Probable beta-1,4-glucan synthase rather involved in the synthesis of the xyloglucan backbone than cellulose. Seems to work simultaneously with xyloglucan 6-xylosyltransferase. Xyloglucan is a noncellulosic polysaccharides of plant cell wall and consists of a glucan backbone substituted by xylose, galactose and fucose. The polypeptide is Probable xyloglucan glycosyltransferase 7 (CSLC7) (Oryza sativa subsp. japonica (Rice)).